A 156-amino-acid chain; its full sequence is Transcriptional regulator MraZ (156 aa).

SpoVT-AbrB domains follow at residues threonine 5 to leucine 51 and methionine 80 to alanine 123.

Belongs to the MraZ family. Forms oligomers.

It localises to the cytoplasm. The protein resides in the nucleoid. The sequence is that of Transcriptional regulator MraZ from Caulobacter vibrioides (strain ATCC 19089 / CIP 103742 / CB 15) (Caulobacter crescentus).